We begin with the raw amino-acid sequence, 290 residues long: Probable prolyl 4-hydroxylase 8 (290 aa).

The Cytoplasmic segment spans residues 1-19; that stretch reads MAKKPKQLRNKPRKSFSTQ. A helical; Signal-anchor for type II membrane protein membrane pass occupies residues 20 to 40; sequence TFTVVVLVLFVILILVGLGIF. The Lumenal segment spans residues 41–290; sequence SLPSTNKTSS…TKWFHVHEYN (250 aa). Residue Asn-46 is glycosylated (N-linked (GlcNAc...) asparagine). Residues 163–286 form the Fe2OG dioxygenase domain; that stretch reads NGEGLQVLHY…KWSSTKWFHV (124 aa). Fe cation is bound by residues His-181 and Asp-183. Residue Asn-222 is glycosylated (N-linked (GlcNAc...) asparagine). His-267 serves as a coordination point for Fe cation. Lys-277 contacts 2-oxoglutarate.

It belongs to the P4HA family. Requires Fe(2+) as cofactor. It depends on L-ascorbate as a cofactor.

The protein resides in the endoplasmic reticulum membrane. The enzyme catalyses L-prolyl-[collagen] + 2-oxoglutarate + O2 = trans-4-hydroxy-L-prolyl-[collagen] + succinate + CO2. Catalyzes the post-translational formation of 4-hydroxyproline in -Xaa-Pro-Gly- sequences in proline-rich peptide sequences of plant glycoproteins and other proteins. Hydroxyprolines are important constituent of many plant cell wall glycoproteins such as extensins, hydroxyproline-rich glycoproteins, lectins and arabinogalactan proteins. The chain is Probable prolyl 4-hydroxylase 8 from Arabidopsis thaliana (Mouse-ear cress).